The sequence spans 590 residues: MGSIEQTTEILLCLSPVEVASLKEGINFFRNKSTGKDYILYKNKSRLRACKNMCKHQGGLFIKDIEDLAGRSVRCTKHNWKLDVSTMKYINPPESFCQDELVVEMDENNRLLLLELNPPNPWDLQPRSPEELAFGEVQITYLTHACMDLKLGDKRMVFDPWLIGPAFARGWWLLHEPPSDWLERLCQADLIYISHLHSDHLSYPTLKKLAGRRPDIPIYVGNTERPVFWNLNQSGVQLTNINVVPFGIWQQVDKNLRFMILMDGVHPEMDTCIIVEYKGHKILNTVDCTRPNGGRLPMKVALMMSDFAGGASGFPMTFSGGKFTEEWKAQFIKTERKKLLNYKARLVKNLQPRIYCPFAGYFVESHPSDKYIKETNTKNDPNELNNLIKKNSDVITWTPRPGATLDLGRMLKDPTDSKGIIEPPEGTKIYKDSWDFEPYLEILNAAVGDEIFLHSSWIKEYFTWAGFKDYNLVVRMIETDEDFNPFPGGYDYLVDFLDLSFPKERPQREHPYEEIHSRVDVIRHVVKNGLLWDELYIGFQTRLQRDPDIYHHLFWNHFQIKLPLTPPNWKSFLMCCEQNGPGILQECKTT.

The Rieske domain occupies 14 to 112; it reads LSPVEVASLK…VEMDENNRLL (99 aa). 4 residues coordinate [2Fe-2S] cluster: cysteine 54, histidine 56, cysteine 75, and histidine 78.

This sequence belongs to the CMP-Neu5Ac hydroxylase family. It depends on [2Fe-2S] cluster as a cofactor.

The protein resides in the cytoplasm. The enzyme catalyses CMP-N-acetyl-beta-neuraminate + 2 Fe(II)-[cytochrome b5] + O2 + 2 H(+) = CMP-N-glycoloyl-beta-neuraminate + 2 Fe(III)-[cytochrome b5] + H2O. The protein operates within amino-sugar metabolism; N-acetylneuraminate metabolism. Functionally, sialic acids are components of carbohydrate chains of glycoconjugates and are involved in cell-cell recognition and cell-pathogen interactions. Catalyzes the conversion of CMP-N-acetylneuraminic acid (CMP-Neu5Ac) into its hydroxylated derivative CMP-N-glycolylneuraminic acid (CMP-Neu5Gc), a sialic acid abundantly expressed at the surface of many cells. This chain is Cytidine monophosphate-N-acetylneuraminic acid hydroxylase, found in Pan troglodytes (Chimpanzee).